A 148-amino-acid polypeptide reads, in one-letter code: Small ribosomal subunit protein eS6 (148 aa).

This sequence belongs to the eukaryotic ribosomal protein eS6 family.

The chain is Small ribosomal subunit protein eS6 from Pyrobaculum neutrophilum (strain DSM 2338 / JCM 9278 / NBRC 100436 / V24Sta) (Thermoproteus neutrophilus).